Reading from the N-terminus, the 345-residue chain is Green-sensitive opsin (345 aa).

Over 1–37 the chain is Extracellular; the sequence is MENGTEGKNFYIPMNNRTGLVRSPYEYPQYYLADPWQ. N-linked (GlcNAc...) asparagine glycans are attached at residues N3 and N16. The helical transmembrane segment at 38–62 threads the bilayer; the sequence is FKLLGIYMFFLILTGFPINALTLVV. At 63-74 the chain is on the cytoplasmic side; the sequence is TAQNKKLRQPLN. A helical membrane pass occupies residues 75-100; it reads FILVNLAVAGLIMVCFGFTVCIYSCM. The Extracellular segment spans residues 101–114; sequence VGYFSLGPLGCTIE. A disulfide bond links C111 and C188. A helical transmembrane segment spans residues 115–134; that stretch reads GFMATLGGQVSLWSLVVLAI. Over 135 to 153 the chain is Cytoplasmic; the sequence is ERYIVVCKPMGSFKFTATH. A helical transmembrane segment spans residues 154–177; the sequence is SAAGCAFTWIMASSCAVPPLVGWS. The Extracellular segment spans residues 178–203; the sequence is RYIPEGIQVSCGPDYYTLAPGFNNES. Residue N201 is glycosylated (N-linked (GlcNAc...) asparagine). The chain crosses the membrane as a helical span at residues 204-231; that stretch reads FVMYMFSCHFCVPVFTIFFTYGSLVMTV. Residues 232–253 are Cytoplasmic-facing; sequence KAAAAQQQDSASTQKAEKEVTR. A helical membrane pass occupies residues 254 to 277; the sequence is MCFLMVLGFLLAWVPYASYAAWIF. Topologically, residues 278–285 are extracellular; the sequence is FNRGAAFS. A helical membrane pass occupies residues 286-310; that stretch reads AMSMAIPSFFSKSSALFNPIIYILL. The residue at position 297 (K297) is an N6-(retinylidene)lysine. Topologically, residues 311–345 are cytoplasmic; the sequence is NKQFRNCMLATIGMGGMVEDETSVSTSKTEVSTAA.

This sequence belongs to the G-protein coupled receptor 1 family. Opsin subfamily. In terms of processing, phosphorylated on some or all of the serine and threonine residues present in the C-terminal region. As to expression, the color pigments are found in the cone photoreceptor cells.

It is found in the membrane. Functionally, visual pigments are the light-absorbing molecules that mediate vision. They consist of an apoprotein, opsin, covalently linked to cis-retinal. The polypeptide is Green-sensitive opsin (Oryzias latipes (Japanese rice fish)).